Consider the following 794-residue polypeptide: Protein sel-1 homolog 1 (794 aa).

The N-terminal stretch at 1 to 21 is a signal peptide; that stretch reads MQVHVGLTLLLCAVLLSSATA. Residues 20 to 91 are disordered; sequence TASSDDESNQ…EEEVSVGEEI (72 aa). Residues 22–737 are interaction with ERLEC1, OS9 and SYVN1; that stretch reads SSDDESNQDE…DIFTQLDMDQ (716 aa). Residues 22-738 lie on the Lumenal side of the membrane; that stretch reads SSDDESNQDE…IFTQLDMDQL (717 aa). Composition is skewed to acidic residues over residues 23 to 32 and 62 to 77; these read SDDESNQDES and DSED…EEEE. Position 63 is a phosphoserine (serine 63). The Fibronectin type-II domain maps to 122–170; that stretch reads AHGEPCHFPFLFLDKEYDECTSDGRQDGRLWCATTYDYKTDEKWGFCET. Disulfide bonds link cysteine 127–cysteine 153 and cysteine 141–cysteine 168. Sel1-like repeat units follow at residues 183–218, 219–254, 255–290, 291–326, 373–409, 410–446, 447–482, 483–518, and 519–554; these read AEMI…GMNH, TKAL…EEGS, PKGQ…LGGN, LIAH…NHVA, VQAQ…NAGN, SHAM…DMGN, PVGQ…EQGW, VDGQ…QGGH, and ILAF…ERGR. Residues asparagine 195 and asparagine 217 are each glycosylated (N-linked (GlcNAc...) asparagine). Asparagine 272 is a glycosylation site (N-linked (GlcNAc...) asparagine). The important for homodimerization and oligomerization stretch occupies residues 352-537; the sequence is NSGMLEEDLI…MHASGTGVMR (186 aa). Asparagine 431 carries N-linked (GlcNAc...) asparagine glycosylation. Asparagine 608 carries an N-linked (GlcNAc...) asparagine glycan. 2 Sel1-like repeats span residues 627–662 and 664–699; these read TVAR…EQQH and AQAM…EASP. Positions 643 to 723 are interaction with SYVN1; the sequence is TDVDYETAFI…VVYFLQYIRE (81 aa). Residues 738–794 form a mediates retention in the endoplasmic reticulum region; sequence LLGPEWDLYLMTIIALLLGTVIAYRQRQHQDVPVPRPPGPWPAPPQQEGPPEQQPPQ. Residues 739–759 traverse the membrane as a helical segment; that stretch reads LGPEWDLYLMTIIALLLGTVI. The Cytoplasmic segment spans residues 760–794; the sequence is AYRQRQHQDVPVPRPPGPWPAPPQQEGPPEQQPPQ. The interval 768-794 is disordered; the sequence is DVPVPRPPGPWPAPPQQEGPPEQQPPQ. Positions 771–794 are enriched in pro residues; it reads VPRPPGPWPAPPQQEGPPEQQPPQ.

It belongs to the sel-1 family. Homodimer and homooligomer. May form a complex with ERLEC1, HSPA5, OS9, and SYVN1. Interacts with FOXRED2 and EDEM1. Interacts with LPL and LMF1; may stabilize the complex formed by LPL and LMF1 and thereby promote the export of LPL dimers. Component of the HRD1 complex, which comprises at least SYNV1/HRD1, DERL1/2, FAM8A1, HERPUD1/HERP, OS9, SEL1L and UBE2J1. SYNV1 assembles with SEL1L and FAM8A1 through its transmembrane domains, but interaction with its cytoplasmic domain is required to confer stability to FAM8A1 and enhance recruitment of HERPUD1. The interaction with SYNV1/HRD1 is direct. In terms of processing, N-glycosylated.

Its subcellular location is the endoplasmic reticulum membrane. Its function is as follows. Plays a role in the endoplasmic reticulum quality control (ERQC) system also called ER-associated degradation (ERAD) involved in ubiquitin-dependent degradation of misfolded endoplasmic reticulum proteins. Enhances SYVN1 stability. Plays a role in LPL maturation and secretion. Required for normal differentiation of the pancreas epithelium, and for normal exocrine function and survival of pancreatic cells. May play a role in Notch signaling. The polypeptide is Protein sel-1 homolog 1 (Sel1l) (Mesocricetus auratus (Golden hamster)).